Consider the following 212-residue polypeptide: Large ribosomal subunit protein uL1 (212 aa).

It belongs to the universal ribosomal protein uL1 family. As to quaternary structure, part of the 50S ribosomal subunit.

Binds directly to 23S rRNA. Probably involved in E site tRNA release. Its function is as follows. Protein L1 is also a translational repressor protein, it controls the translation of its operon by binding to its mRNA. The polypeptide is Large ribosomal subunit protein uL1 (Haloquadratum walsbyi (strain DSM 16790 / HBSQ001)).